Consider the following 134-residue polypeptide: Crustacean hyperglycemic hormones isoform B (134 aa).

The signal sequence occupies residues Met1–Gly24. Pyrrolidone carboxylic acid is present on Gln61. Phe63 bears the D-phenylalanine; in form CHH-B-II mark. 3 disulfide bridges follow: Cys67-Cys103, Cys83-Cys99, and Cys86-Cys112. Residue Val132 is modified to Valine amide.

It belongs to the arthropod CHH/MIH/GIH/VIH hormone family. In terms of processing, stereoinversion of L-Phe (form CHH-B-I) to D-Phe (form CHH-B-II). As to expression, produced by the medulla terminalis X-organ in the eyestalks and transported to the sinus gland where they are stored and released. Present also in the ventral nervous system.

The protein localises to the secreted. Its function is as follows. Hormone found in the sinus gland of isopods and decapods which controls the blood sugar level. Has a secretagogue action over the amylase released from the midgut gland. May act as a stress hormone and may be involved in the control of molting and reproduction. This is Crustacean hyperglycemic hormones isoform B from Homarus americanus (American lobster).